The primary structure comprises 440 residues: Chorismate synthase 1, chloroplastic (440 aa).

A chloroplast-targeting transit peptide spans Met-1 to Ala-54. Residues Arg-100–Asp-147 are disordered. Polar residues predominate over residues Cys-118–Ser-132.

Belongs to the chorismate synthase family. As to quaternary structure, homotetramer. Requires FMNH2 as cofactor. As to expression, predominantly expressed in flowers and roots and, to a lesser extent, in stems, leaves, and cotyledons.

The protein resides in the plastid. It is found in the chloroplast. The catalysed reaction is 5-O-(1-carboxyvinyl)-3-phosphoshikimate = chorismate + phosphate. The protein operates within metabolic intermediate biosynthesis; chorismate biosynthesis; chorismate from D-erythrose 4-phosphate and phosphoenolpyruvate: step 7/7. Its function is as follows. Catalyzes the last common step of the biosynthesis of aromatic amino acids, produced via the shikimic acid pathway. In Solanum lycopersicum (Tomato), this protein is Chorismate synthase 1, chloroplastic (CS1).